The following is a 156-amino-acid chain: ATP synthase subunit b (156 aa).

A helical transmembrane segment spans residues 7–29 (LFAQMVVFLVLAWFTMKFVWPPL).

The protein belongs to the ATPase B chain family. F-type ATPases have 2 components, F(1) - the catalytic core - and F(0) - the membrane proton channel. F(1) has five subunits: alpha(3), beta(3), gamma(1), delta(1), epsilon(1). F(0) has three main subunits: a(1), b(2) and c(10-14). The alpha and beta chains form an alternating ring which encloses part of the gamma chain. F(1) is attached to F(0) by a central stalk formed by the gamma and epsilon chains, while a peripheral stalk is formed by the delta and b chains.

Its subcellular location is the cell inner membrane. Functionally, f(1)F(0) ATP synthase produces ATP from ADP in the presence of a proton or sodium gradient. F-type ATPases consist of two structural domains, F(1) containing the extramembraneous catalytic core and F(0) containing the membrane proton channel, linked together by a central stalk and a peripheral stalk. During catalysis, ATP synthesis in the catalytic domain of F(1) is coupled via a rotary mechanism of the central stalk subunits to proton translocation. In terms of biological role, component of the F(0) channel, it forms part of the peripheral stalk, linking F(1) to F(0). This is ATP synthase subunit b from Burkholderia ambifaria (strain MC40-6).